We begin with the raw amino-acid sequence, 161 residues long: Ribonuclease H (161 aa).

One can recognise an RNase H type-1 domain in the interval 3-144 (GLKQISIYTD…CDDLARQAAE (142 aa)). Aspartate 12, glutamate 50, aspartate 72, and aspartate 136 together coordinate Mg(2+). The segment at 133 to 161 (ERCDDLARQAAEAKPSQEDSGYINQQAQA) is disordered. The span at 150–161 (EDSGYINQQAQA) shows a compositional bias: polar residues.

The protein belongs to the RNase H family. As to quaternary structure, monomer. Mg(2+) is required as a cofactor.

Its subcellular location is the cytoplasm. The catalysed reaction is Endonucleolytic cleavage to 5'-phosphomonoester.. In terms of biological role, endonuclease that specifically degrades the RNA of RNA-DNA hybrids. This Shewanella halifaxensis (strain HAW-EB4) protein is Ribonuclease H.